We begin with the raw amino-acid sequence, 215 residues long: Glycerol-3-phosphate acyltransferase (215 aa).

6 helical membrane passes run 3 to 23 (LILLILTAYLLGSIPTGLWIG), 42 to 61 (TNTFRILGLKAGAATLLIDI), 68 to 90 (TLLPVLVGASNVSPIAIGFFAVL), 110 to 130 (AGVLLGFAPLYLLFLAAVFVL), 134 to 154 (LFSMISLASLTASVVAVISVL), and 162 to 182 (LLPGYDWLLTITIVVLAAIII).

It belongs to the PlsY family. As to quaternary structure, probably interacts with PlsX.

It localises to the cell membrane. It catalyses the reaction an acyl phosphate + sn-glycerol 3-phosphate = a 1-acyl-sn-glycero-3-phosphate + phosphate. The protein operates within lipid metabolism; phospholipid metabolism. In terms of biological role, catalyzes the transfer of an acyl group from acyl-phosphate (acyl-PO(4)) to glycerol-3-phosphate (G3P) to form lysophosphatidic acid (LPA). This enzyme utilizes acyl-phosphate as fatty acyl donor, but not acyl-CoA or acyl-ACP. This is Glycerol-3-phosphate acyltransferase from Streptococcus equi subsp. zooepidemicus (strain MGCS10565).